Consider the following 439-residue polypeptide: Adenylosuccinate synthetase (439 aa).

GTP is bound by residues G13–K19 and G41–T43. D14 serves as the catalytic Proton acceptor. Mg(2+) is bound by residues D14 and G41. IMP contacts are provided by residues D14–K17, N39–H42, T130, R144, Q226, T241, and R313. H42 serves as the catalytic Proton donor. A309–R315 serves as a coordination point for substrate. GTP-binding positions include R315, K341 to D343, and S422 to G424.

The protein belongs to the adenylosuccinate synthetase family. In terms of assembly, homodimer. It depends on Mg(2+) as a cofactor.

It is found in the cytoplasm. It carries out the reaction IMP + L-aspartate + GTP = N(6)-(1,2-dicarboxyethyl)-AMP + GDP + phosphate + 2 H(+). It functions in the pathway purine metabolism; AMP biosynthesis via de novo pathway; AMP from IMP: step 1/2. Functionally, plays an important role in the de novo pathway of purine nucleotide biosynthesis. Catalyzes the first committed step in the biosynthesis of AMP from IMP. This is Adenylosuccinate synthetase from Acinetobacter baylyi (strain ATCC 33305 / BD413 / ADP1).